The chain runs to 860 residues: Transcription factor E2F8 (860 aa).

Disordered regions lie at residues 1–27 (MENQKENLFSEPHKRGLMKSPLHPSSK) and 38–57 (DLGPLTTPTKPKEVSQGEPW). Phosphoserine is present on residues Ser71 and Ser102. DNA-binding regions lie at residues 113-182 (RKEK…TWHG) and 261-347 (RKDK…KWTG). 3 disordered regions span residues 407-433 (RRKISSAPSSPVKSNKAESSQNSPPVP), 532-616 (LTPP…PKED), and 745-803 (QMSA…QPVP). 2 positions are modified to phosphoserine: Ser412 and Ser416. 2 stretches are compositionally biased toward polar residues: residues 412–429 (SAPSSPVKSNKAESSQNS) and 542–554 (VCPTQPSNATGSK). The span at 555–565 (DPTDAPAEKTA) shows a compositional bias: basic and acidic residues.

This sequence belongs to the E2F/DP family. In terms of assembly, interacts with HIF1A. Homodimer and heterodimer: mainly forms homodimers and, to a lesser extent, heterodimers with E2F8. Dimerization is important for DNA-binding. Highly expressed in liver, skin, thymus and testis. Expressed in trophoblast giant cells throughout placenta development (at protein level).

Its subcellular location is the nucleus. Functionally, atypical E2F transcription factor that participates in various processes such as angiogenesis and polyploidization of specialized cells. Mainly acts as a transcription repressor that binds DNA independently of DP proteins and specifically recognizes the E2 recognition site 5'-TTTC[CG]CGC-3'. Directly represses transcription of classical E2F transcription factors such as E2F1: component of a feedback loop in S phase by repressing the expression of E2F1, thereby preventing p53/TP53-dependent apoptosis. Plays a key role in polyploidization of cells in placenta and liver by regulating the endocycle, probably by repressing genes promoting cytokinesis and antagonizing action of classical E2F proteins (E2F1, E2F2 and/or E2F3). Required for placental development by promoting polyploidization of trophoblast giant cells. Acts as a promoter of sprouting angiogenesis, possibly by acting as a transcription activator: associates with HIF1A, recognizes and binds the VEGFA promoter, which is different from canonical E2 recognition site, and activates expression of the VEGFA gene. This chain is Transcription factor E2F8 (E2f8), found in Mus musculus (Mouse).